Here is a 582-residue protein sequence, read N- to C-terminus: Two-component response regulator ORR26 (582 aa).

Positions 11–126 (RVLVVDDDPT…ELRNIWQHVY (116 aa)) constitute a Response regulatory domain. A 4-aspartylphosphate modification is found at aspartate 62. Residues 166-182 (SDTMRKRKDVDKDHADQ) show a composition bias toward basic and acidic residues. Residues 166 to 187 (SDTMRKRKDVDKDHADQESSDG) are disordered. The segment at residues 189–248 (TVKKARVVWSVDLHQKFVNAVNQIGFDKVGPKKILDLMNVPGLTRENVASHLQKYRLYLS) is a DNA-binding region (myb-like GARP).

The protein belongs to the ARR family. Type-B subfamily. Two-component system major event consists of a His-to-Asp phosphorelay between a sensor histidine kinase (HK) and a response regulator (RR). In plants, the His-to-Asp phosphorelay involves an additional intermediate named Histidine-containing phosphotransfer protein (HPt). This multistep phosphorelay consists of a His-Asp-His-Asp sequential transfer of a phosphate group between first a His and an Asp of the HK protein, followed by the transfer to a conserved His of the HPt protein and finally the transfer to an Asp in the receiver domain of the RR protein.

It is found in the nucleus. Its function is as follows. Transcriptional activator that binds specific DNA sequence. Functions as a response regulator involved in His-to-Asp phosphorelay signal transduction system. Phosphorylation of the Asp residue in the receiver domain activates the ability of the protein to promote the transcription of target genes. May directly activate some type-A response regulators in response to cytokinins. The polypeptide is Two-component response regulator ORR26 (Oryza sativa subsp. japonica (Rice)).